Here is a 385-residue protein sequence, read N- to C-terminus: Methionine aminopeptidase 1 (385 aa).

A C6H2-type zinc finger spans residues 6–59 (SRVCETEGCSSEAKLQCPTCIKLGIQGSYFCSQECFKGSWASHKLLHKKAKDDK). Zn(2+) contacts are provided by Cys-9, Cys-14, Cys-22, Cys-25, Cys-36, Cys-40, His-48, and His-52. Residue His-203 participates in a protein binding. Zn(2+)-binding residues include Asp-220, Asp-231, and His-294. His-301 provides a ligand contact to a protein. Glu-327 and Glu-358 together coordinate Zn(2+).

This sequence belongs to the peptidase M24A family. Methionine aminopeptidase type 1 subfamily. Associates with the 60S ribosomal subunit of the 80S translational complex. Zn(2+) is required as a cofactor. Requires Co(2+) as cofactor. The cofactor is Mn(2+). It depends on Fe(2+) as a cofactor.

It is found in the cytoplasm. It catalyses the reaction Release of N-terminal amino acids, preferentially methionine, from peptides and arylamides.. Cotranslationally removes the N-terminal methionine from nascent proteins. The N-terminal methionine is often cleaved when the second residue in the primary sequence is small and uncharged (Met-Ala-, Cys, Gly, Pro, Ser, Thr, or Val). The sequence is that of Methionine aminopeptidase 1 (metap1) from Xenopus tropicalis (Western clawed frog).